A 248-amino-acid polypeptide reads, in one-letter code: ATP synthase subunit a, chloroplastic (248 aa).

5 helical membrane-spanning segments follow: residues 37-57, 96-116, 134-154, 200-220, and 221-241; these read AQVL…AILA, VPFI…GALL, DINT…YAGL, LVVA…MMFL, and GLFT…AYIG.

This sequence belongs to the ATPase A chain family. In terms of assembly, F-type ATPases have 2 components, CF(1) - the catalytic core - and CF(0) - the membrane proton channel. CF(1) has five subunits: alpha(3), beta(3), gamma(1), delta(1), epsilon(1). CF(0) has four main subunits: a, b, b' and c.

It is found in the plastid. The protein localises to the chloroplast thylakoid membrane. Key component of the proton channel; it plays a direct role in the translocation of protons across the membrane. This chain is ATP synthase subunit a, chloroplastic, found in Anthoceros angustus (Hornwort).